A 340-amino-acid chain; its full sequence is L-threonine 3-dehydrogenase (340 aa).

Residue cysteine 38 participates in Zn(2+) binding. Active-site charge relay system residues include threonine 40 and histidine 43. Zn(2+) contacts are provided by histidine 63, glutamate 64, cysteine 93, cysteine 96, cysteine 99, and cysteine 107. Residues isoleucine 175, aspartate 195, arginine 200, 261–263 (LGI), and 285–286 (IY) contribute to the NAD(+) site.

This sequence belongs to the zinc-containing alcohol dehydrogenase family. Homotetramer. It depends on Zn(2+) as a cofactor.

The protein resides in the cytoplasm. It catalyses the reaction L-threonine + NAD(+) = (2S)-2-amino-3-oxobutanoate + NADH + H(+). Its pathway is amino-acid degradation; L-threonine degradation via oxydo-reductase pathway; glycine from L-threonine: step 1/2. In terms of biological role, catalyzes the NAD(+)-dependent oxidation of L-threonine to 2-amino-3-ketobutyrate. This is L-threonine 3-dehydrogenase from Xanthomonas axonopodis pv. citri (strain 306).